The sequence spans 260 residues: Thiazole synthase (260 aa).

Catalysis depends on Lys-96, which acts as the Schiff-base intermediate with DXP. 1-deoxy-D-xylulose 5-phosphate contacts are provided by residues Gly-157, 183–184 (AG), and 205–206 (AS).

It belongs to the ThiG family. As to quaternary structure, homotetramer. Forms heterodimers with either ThiH or ThiS.

The protein resides in the cytoplasm. It carries out the reaction [ThiS sulfur-carrier protein]-C-terminal-Gly-aminoethanethioate + 2-iminoacetate + 1-deoxy-D-xylulose 5-phosphate = [ThiS sulfur-carrier protein]-C-terminal Gly-Gly + 2-[(2R,5Z)-2-carboxy-4-methylthiazol-5(2H)-ylidene]ethyl phosphate + 2 H2O + H(+). The protein operates within cofactor biosynthesis; thiamine diphosphate biosynthesis. In terms of biological role, catalyzes the rearrangement of 1-deoxy-D-xylulose 5-phosphate (DXP) to produce the thiazole phosphate moiety of thiamine. Sulfur is provided by the thiocarboxylate moiety of the carrier protein ThiS. In vitro, sulfur can be provided by H(2)S. This Corynebacterium glutamicum (strain ATCC 13032 / DSM 20300 / JCM 1318 / BCRC 11384 / CCUG 27702 / LMG 3730 / NBRC 12168 / NCIMB 10025 / NRRL B-2784 / 534) protein is Thiazole synthase.